Here is a 192-residue protein sequence, read N- to C-terminus: Putative acetyltransferase YjbC (192 aa).

Residues 1 to 139 (MNWYEKLSEY…MEILYWSPKT (139 aa)) enclose the N-acetyltransferase domain.

The protein localises to the cytoplasm. The polypeptide is Putative acetyltransferase YjbC (yjbC) (Bacillus subtilis (strain 168)).